A 308-amino-acid polypeptide reads, in one-letter code: Porphobilinogen deaminase (308 aa).

Cys-241 carries the S-(dipyrrolylmethanemethyl)cysteine modification.

The protein belongs to the HMBS family. As to quaternary structure, monomer. Requires dipyrromethane as cofactor.

The enzyme catalyses 4 porphobilinogen + H2O = hydroxymethylbilane + 4 NH4(+). It functions in the pathway porphyrin-containing compound metabolism; protoporphyrin-IX biosynthesis; coproporphyrinogen-III from 5-aminolevulinate: step 2/4. Its function is as follows. Tetrapolymerization of the monopyrrole PBG into the hydroxymethylbilane pre-uroporphyrinogen in several discrete steps. This chain is Porphobilinogen deaminase, found in Staphylococcus aureus (strain bovine RF122 / ET3-1).